Here is a 223-residue protein sequence, read N- to C-terminus: Uracil-DNA glycosylase (223 aa).

D66 functions as the Proton acceptor in the catalytic mechanism.

The protein belongs to the uracil-DNA glycosylase (UDG) superfamily. UNG family.

It is found in the cytoplasm. The catalysed reaction is Hydrolyzes single-stranded DNA or mismatched double-stranded DNA and polynucleotides, releasing free uracil.. Its function is as follows. Excises uracil residues from the DNA which can arise as a result of misincorporation of dUMP residues by DNA polymerase or due to deamination of cytosine. The chain is Uracil-DNA glycosylase from Sulfurimonas denitrificans (strain ATCC 33889 / DSM 1251) (Thiomicrospira denitrificans (strain ATCC 33889 / DSM 1251)).